The chain runs to 281 residues: NADPH-dependent 7-cyano-7-deazaguanine reductase (281 aa).

88-90 (VES) is a substrate binding site. 90 to 91 (SK) serves as a coordination point for NADPH. The active-site Thioimide intermediate is the cysteine 189. Aspartate 196 functions as the Proton donor in the catalytic mechanism. 228-229 (HE) contributes to the substrate binding site. NADPH is bound at residue 257–258 (RG).

The protein belongs to the GTP cyclohydrolase I family. QueF type 2 subfamily. As to quaternary structure, homodimer.

It localises to the cytoplasm. It catalyses the reaction 7-aminomethyl-7-carbaguanine + 2 NADP(+) = 7-cyano-7-deazaguanine + 2 NADPH + 3 H(+). It participates in tRNA modification; tRNA-queuosine biosynthesis. Its function is as follows. Catalyzes the NADPH-dependent reduction of 7-cyano-7-deazaguanine (preQ0) to 7-aminomethyl-7-deazaguanine (preQ1). This is NADPH-dependent 7-cyano-7-deazaguanine reductase from Klebsiella pneumoniae subsp. pneumoniae (strain ATCC 700721 / MGH 78578).